We begin with the raw amino-acid sequence, 281 residues long: Ribosomal protein L11 methyltransferase (281 aa).

S-adenosyl-L-methionine contacts are provided by threonine 133, glycine 154, aspartate 175, and asparagine 216.

The protein belongs to the methyltransferase superfamily. PrmA family.

It localises to the cytoplasm. The enzyme catalyses L-lysyl-[protein] + 3 S-adenosyl-L-methionine = N(6),N(6),N(6)-trimethyl-L-lysyl-[protein] + 3 S-adenosyl-L-homocysteine + 3 H(+). Functionally, methylates ribosomal protein L11. This chain is Ribosomal protein L11 methyltransferase, found in Campylobacter jejuni subsp. jejuni serotype O:6 (strain 81116 / NCTC 11828).